The chain runs to 381 residues: Homoserine O-succinyltransferase (381 aa).

The AB hydrolase-1 domain occupies 45-360; the sequence is NAVLVCHALN…PHGHDAFLLD (316 aa). Ser-151 serves as the catalytic Nucleophile. Arg-221 serves as a coordination point for substrate. Catalysis depends on residues Asp-321 and His-354. Substrate is bound at residue Asp-355.

The protein belongs to the AB hydrolase superfamily. MetX family. In terms of assembly, homodimer.

It localises to the cytoplasm. It catalyses the reaction L-homoserine + succinyl-CoA = O-succinyl-L-homoserine + CoA. It participates in amino-acid biosynthesis; L-methionine biosynthesis via de novo pathway; O-succinyl-L-homoserine from L-homoserine: step 1/1. Its function is as follows. Transfers a succinyl group from succinyl-CoA to L-homoserine, forming succinyl-L-homoserine. This Burkholderia multivorans (strain ATCC 17616 / 249) protein is Homoserine O-succinyltransferase.